The following is a 541-amino-acid chain: Membrane protein insertase YidC (541 aa).

6 consecutive transmembrane segments (helical) span residues 6–26, 325–345, 349–369, 420–440, 457–477, and 500–520; these read NILL…WQAD, LVVD…LLMF, FVGN…GLLF, GGCL…WVLL, LSVQ…MFIM, and VIFT…WLVG.

It belongs to the OXA1/ALB3/YidC family. Type 1 subfamily. As to quaternary structure, interacts with the Sec translocase complex via SecD. Specifically interacts with transmembrane segments of nascent integral membrane proteins during membrane integration.

It localises to the cell inner membrane. Its function is as follows. Required for the insertion and/or proper folding and/or complex formation of integral membrane proteins into the membrane. Involved in integration of membrane proteins that insert both dependently and independently of the Sec translocase complex, as well as at least some lipoproteins. Aids folding of multispanning membrane proteins. In Shewanella sp. (strain W3-18-1), this protein is Membrane protein insertase YidC.